Here is a 236-residue protein sequence, read N- to C-terminus: Endonuclease NucS (236 aa).

It belongs to the NucS endonuclease family.

The protein localises to the cytoplasm. Functionally, cleaves both 3' and 5' ssDNA extremities of branched DNA structures. This is Endonuclease NucS from Saccharolobus solfataricus (strain ATCC 35092 / DSM 1617 / JCM 11322 / P2) (Sulfolobus solfataricus).